We begin with the raw amino-acid sequence, 240 residues long: Cilia- and flagella-associated protein 77 (240 aa).

It belongs to the CFAP77 family.

It localises to the cytoplasm. It is found in the cytoskeleton. Its subcellular location is the cilium axoneme. The protein resides in the flagellum axoneme. Microtubule inner protein (MIP) part of the dynein-decorated doublet microtubules (DMTs) in cilia axoneme, which is required for motile cilia beating. The chain is Cilia- and flagella-associated protein 77 from Danio rerio (Zebrafish).